The primary structure comprises 196 residues: Ribosome maturation factor RimP (196 aa).

Positions 164–196 (LAPQKPNKPGPKKPGHEKKKPSNESAAGKPRAE) are disordered. Residues 173-182 (GPKKPGHEKK) show a composition bias toward basic residues.

Belongs to the RimP family.

Its subcellular location is the cytoplasm. Its function is as follows. Required for maturation of 30S ribosomal subunits. This Xanthomonas axonopodis pv. citri (strain 306) protein is Ribosome maturation factor RimP.